The primary structure comprises 449 residues: Type 3 secretion system ATPase (449 aa).

178–183 contributes to the ATP binding site; it reads GCGKTT.

It belongs to the ATPase alpha/beta chains family. T3SS ATPase subfamily. In terms of assembly, the core secretion machinery of the T3SS is composed of approximately 20 different proteins, including cytoplasmic components, a base, an export apparatus and a needle. This subunit is part of the cytosolic complex. Forms homododecamers.

It localises to the cytoplasm. It carries out the reaction ATP + H2O + cellular proteinSide 1 = ADP + phosphate + cellular proteinSide 2.. In terms of biological role, ATPase component of the type III secretion system (T3SS), also called injectisome, which is used to inject bacterial effector proteins into eukaryotic host cells. Acts as a molecular motor to provide the energy that is required for the export of proteins. Required for type III secretion apparatus (T3SA) formation, proper protein secretion, host cell invasion and virulence. May play a critical role in T3SS substrate recognition, disassembly of the effector/chaperone complex and unfolding of the effector in an ATP-dependent manner prior to secretion. This chain is Type 3 secretion system ATPase, found in Pseudomonas syringae pv. syringae.